Consider the following 770-residue polypeptide: Coiled-coil alpha-helical rod protein 1 (770 aa).

Coiled coils occupy residues 56–289 (STVT…DLQA), 334–420 (LRNW…RQEQ), and 476–669 (GLMA…RKEE). 4 disordered regions span residues 573–592 (LEAARRGQQESTEEAASLRQ), 641–672 (LRQIQHKATQEKERNQELRRLQDEARKEEGQR), 700–721 (NKKCSPRSVESSSSESPAAASC), and 744–770 (SRDEDICVEDNQNTKKTKNPPSDPLLS). Residues 648-672 (ATQEKERNQELRRLQDEARKEEGQR) show a composition bias toward basic and acidic residues. Positions 701-721 (KKCSPRSVESSSSESPAAASC) are enriched in low complexity.

Its subcellular location is the cytoplasm. The protein resides in the nucleus. May be a regulator of keratinocyte proliferation or differentiation. This chain is Coiled-coil alpha-helical rod protein 1 (Cchcr1), found in Mus musculus (Mouse).